The chain runs to 131 residues: Large ribosomal subunit protein bL17 (131 aa).

It belongs to the bacterial ribosomal protein bL17 family. As to quaternary structure, part of the 50S ribosomal subunit. Contacts protein L32.

The chain is Large ribosomal subunit protein bL17 from Chromobacterium violaceum (strain ATCC 12472 / DSM 30191 / JCM 1249 / CCUG 213 / NBRC 12614 / NCIMB 9131 / NCTC 9757 / MK).